Consider the following 216-residue polypeptide: Adenylate kinase (216 aa).

13 to 18 (GAGKGT) contributes to the ATP binding site. Residues 33-66 (TTGDALRANKTKDITHLDVEYDTPGAYMDAGELV) form an NMP region. Residues threonine 34, arginine 39, 64–66 (ELV), 89–92 (GYPR), and glutamine 96 each bind AMP. The LID stretch occupies residues 125–162 (GRRVCEDCGATFHVSFNQPETEGVCDACGGSLYQREDD). ATP is bound at residue arginine 126. Residues cysteine 129 and cysteine 132 each contribute to the Zn(2+) site. 135 to 136 (TF) lines the ATP pocket. Zn(2+) contacts are provided by cysteine 149 and cysteine 152. The AMP site is built by arginine 159 and arginine 170. Residue arginine 198 coordinates ATP.

This sequence belongs to the adenylate kinase family. As to quaternary structure, monomer.

Its subcellular location is the cytoplasm. The enzyme catalyses AMP + ATP = 2 ADP. It functions in the pathway purine metabolism; AMP biosynthesis via salvage pathway; AMP from ADP: step 1/1. Catalyzes the reversible transfer of the terminal phosphate group between ATP and AMP. Plays an important role in cellular energy homeostasis and in adenine nucleotide metabolism. The chain is Adenylate kinase from Halobacterium salinarum (strain ATCC 700922 / JCM 11081 / NRC-1) (Halobacterium halobium).